A 216-amino-acid polypeptide reads, in one-letter code: Cytochrome c biogenesis ATP-binding export protein CcmA (216 aa).

The ABC transporter domain occupies 18 to 216; sequence LQVEGLAGRR…AHARTLEISA (199 aa). 50–57 is a binding site for ATP; the sequence is GHNGSGKT.

It belongs to the ABC transporter superfamily. CcmA exporter (TC 3.A.1.107) family. The complex is composed of two ATP-binding proteins (CcmA) and two transmembrane proteins (CcmB).

It is found in the cell inner membrane. The enzyme catalyses heme b(in) + ATP + H2O = heme b(out) + ADP + phosphate + H(+). Part of the ABC transporter complex CcmAB involved in the biogenesis of c-type cytochromes; once thought to export heme, this seems not to be the case, but its exact role is uncertain. Responsible for energy coupling to the transport system. This Nitrosococcus oceani (strain ATCC 19707 / BCRC 17464 / JCM 30415 / NCIMB 11848 / C-107) protein is Cytochrome c biogenesis ATP-binding export protein CcmA.